A 260-amino-acid polypeptide reads, in one-letter code: tRNA (guanine-N(1)-)-methyltransferase (260 aa).

S-adenosyl-L-methionine contacts are provided by residues G117 and 137–142 (LGDFVL).

This sequence belongs to the RNA methyltransferase TrmD family. Homodimer.

The protein localises to the cytoplasm. It catalyses the reaction guanosine(37) in tRNA + S-adenosyl-L-methionine = N(1)-methylguanosine(37) in tRNA + S-adenosyl-L-homocysteine + H(+). Specifically methylates guanosine-37 in various tRNAs. This chain is tRNA (guanine-N(1)-)-methyltransferase, found in Cupriavidus necator (strain ATCC 17699 / DSM 428 / KCTC 22496 / NCIMB 10442 / H16 / Stanier 337) (Ralstonia eutropha).